The following is a 315-amino-acid chain: Aspartate carbamoyltransferase catalytic subunit (315 aa).

Positions 64 and 65 each coordinate carbamoyl phosphate. An L-aspartate-binding site is contributed by Lys-92. Positions 114, 142, and 145 each coordinate carbamoyl phosphate. Residues Arg-175 and Arg-229 each contribute to the L-aspartate site. Residues Gly-270 and Pro-271 each contribute to the carbamoyl phosphate site.

Belongs to the aspartate/ornithine carbamoyltransferase superfamily. ATCase family. Heterododecamer (2C3:3R2) of six catalytic PyrB chains organized as two trimers (C3), and six regulatory PyrI chains organized as three dimers (R2).

It carries out the reaction carbamoyl phosphate + L-aspartate = N-carbamoyl-L-aspartate + phosphate + H(+). Its pathway is pyrimidine metabolism; UMP biosynthesis via de novo pathway; (S)-dihydroorotate from bicarbonate: step 2/3. Catalyzes the condensation of carbamoyl phosphate and aspartate to form carbamoyl aspartate and inorganic phosphate, the committed step in the de novo pyrimidine nucleotide biosynthesis pathway. The chain is Aspartate carbamoyltransferase catalytic subunit from Methylorubrum populi (strain ATCC BAA-705 / NCIMB 13946 / BJ001) (Methylobacterium populi).